The chain runs to 1120 residues: ELKS/Rab6-interacting/CAST family member 1 (1120 aa).

The segment at 1 to 54 (MYGSARSVGKVEPSSQSPGRSPRLPRSPRLGHRRTNSTGGSSGNSVGGGSGKTL) is disordered. Lys-10 carries the post-translational modification N6-acetyllysine. Positions 13–28 (PSSQSPGRSPRLPRSP) are enriched in low complexity. Ser-17, Ser-21, and Ser-37 each carry phosphoserine. Residue Thr-38 is modified to Phosphothreonine. Gly residues predominate over residues 40 to 51 (GSSGNSVGGGSG). 6 positions are modified to phosphoserine: Ser-55, Ser-75, Ser-94, Ser-824, Leu-965, and Ser-1009. Positions 144 to 992 (RQARDNTIMD…RMKLMADNYE (849 aa)) form a coiled coil. The segment covering 801–824 (KHKEQVEKKKSAQMLEEARRREDS) has biased composition (basic and acidic residues). The segment at 801–840 (KHKEQVEKKKSAQMLEEARRREDSLSDSSQQLQDSLRKKD) is disordered. Phosphothreonine is present on Thr-1050. The FIP-RBD domain occupies 1050–1112 (TPPASYNADG…DHCPDILEQV (63 aa)). A coiled-coil region spans residues 1060–1104 (EQAAWENELQQMTQEQLQNELEKVEGDNAELQEFANTILQQIADH).

Interacts with the GTB-bound forms of RAB6A isoform 1 and isoform 2 and with RAB6B. The interaction was strongest with RAB6B, followed by RAB6A isoform 2 and weakest with RAB6A isoform 1. Part of a complex with CHUK, IKBKB and IKBKG. Interacts with CHUK, IKBKB and IKBKG. The interaction with IKBKG is independent of CHUK and IKBKB. Interacts with NFKBIA. Isoform 2 interacts through its C-terminus with the PDZ domains of RIMS1 and RIMS2. Interacts with ERC2/CAST1. Interacts with SDCCAG8. Part of a cortical microtubule stabilization complex (CMSC) composed of KANK1, PPFIA1, PPFIBP1, ERC1/ELKS, PHLDB2/LL5beta, CLASPs, KIF21A and possibly additional interactors; within CMSCs KANK1 and PHLDB2/LL5beta appear to be the core components for targeting of microtubule-binding proteins KIF21A and CLASPs, whereas PPFIA1, PPFIBP1 and ERC1/ELKS serve as scaffolds for protein clustering. Widely expressed.

The protein localises to the cytoplasm. It localises to the cytoskeleton. It is found in the microtubule organizing center. Its subcellular location is the centrosome. The protein resides in the membrane. The protein localises to the golgi apparatus membrane. It localises to the presynaptic active zone. It is found in the cell projection. Its subcellular location is the podosome. Its function is as follows. Regulatory subunit of the IKK complex. Probably recruits IkappaBalpha/NFKBIA to the complex. May be involved in the organization of the cytomatrix at the nerve terminals active zone (CAZ) which regulates neurotransmitter release. May be involved in vesicle trafficking at the CAZ. May be involved in Rab-6 regulated endosomes to Golgi transport. This chain is ELKS/Rab6-interacting/CAST family member 1, found in Mus musculus (Mouse).